We begin with the raw amino-acid sequence, 373 residues long: SWI/SNF-related matrix-associated actin-dependent regulator of chromatin subfamily B member 1-A (373 aa).

Residues 1 to 101 form a DNA-binding region; the sequence is MALSKTYGQK…DEKYKAVSIS (101 aa).

The protein belongs to the SNF5 family. Component of the multiprotein chromatin-remodeling complexes SWI/SNF. Component of neural progenitors-specific chromatin remodeling complex (npBAF complex) and the neuron-specific chromatin remodeling complex (nBAF complex). Component of the BAF (SWI/SNF) chromatin remodeling complex. Component of the SWI/SNF-B (PBAF) chromatin remodeling complex. Binds to double-stranded DNA.

The protein resides in the nucleus. Its function is as follows. Involved in chromatin-remodeling. Core component of the BAF (SWI/SNF) complex. This ATP-dependent chromatin-remodeling complex plays important roles in cell proliferation and differentiation, in cellular antiviral activities and inhibition of tumor formation. Belongs to the neural progenitors-specific chromatin remodeling complex (npBAF complex) and the neuron-specific chromatin remodeling complex (nBAF complex) and may play a role in neural development. The polypeptide is SWI/SNF-related matrix-associated actin-dependent regulator of chromatin subfamily B member 1-A (smarcb1a) (Danio rerio (Zebrafish)).